Reading from the N-terminus, the 935-residue chain is Progesterone receptor (935 aa).

The segment at 1–164 (MTELKAKGPR…PATQRVLSPL (164 aa)) is AF3; mediates transcriptional activation. The interval 1-256 (MTELKAKGPR…AAAGGGAAAV (256 aa)) is disordered. Positions 1–568 (MTELKAKGPR…YSFESLPQKI (568 aa)) are modulating, Pro-Rich. Ser20 carries the phosphoserine modification. The LXXL motif 1 signature appears at 55–59 (LDGLL). Residue Ser81 is modified to Phosphoserine. The LXXL motif 2 motif lies at 115–119 (LDTLL). Residues Ser130 and Ser162 each carry the phosphoserine modification. The mediates transcriptional transrepression stretch occupies residues 165-305 (MSRSGGKAGD…LATTTMDFTH (141 aa)). Positions 183–187 (KVLPR) match the Nuclear localization signal motif. 2 positions are modified to phosphoserine: Ser190 and Ser213. Acidic residues predominate over residues 220 to 231 (EVEEEDGSESED). Low complexity predominate over residues 232-246 (SAGPLLKGKPRALGG). A Phosphoserine; by MAPK1 modification is found at Ser294. A disordered region spans residues 328–353 (SYDGGAGAASAFAPPRSSPSASSTPV). A compositionally biased stretch (low complexity) spans 335–350 (AASAFAPPRSSPSASS). A Phosphoserine; by MAPK modification is found at Ser345. Residue Lys388 forms a Glycyl lysine isopeptide (Lys-Gly) (interchain with G-Cter in SUMO); alternate linkage. Residue Lys388 forms a Glycyl lysine isopeptide (Lys-Gly) (interchain with G-Cter in ubiquitin); alternate linkage. Position 400 is a phosphoserine; by CDK2 (Ser400). Residues 415 to 452 (PDFPLGPPPPLPPRAPPSRPGEAAVTAAPAGASVSSAS) form a disordered region. The span at 418-433 (PLGPPPPLPPRAPPSR) shows a compositional bias: pro residues. Over residues 434–452 (PGEAAVTAAPAGASVSSAS) the composition is skewed to low complexity. Residues 456–548 (STLECILYKA…VYPPYLNYLR (93 aa)) are AF1; mediates transcriptional activation. Residue Lys533 forms a Glycyl lysine isopeptide (Lys-Gly) (interchain with G-Cter in SUMO) linkage. 2 consecutive NR C4-type zinc fingers follow at residues 569-589 (CLIC…CGSC) and 605-629 (CAGR…LRKC). The nuclear receptor DNA-binding region spans 569–641 (CLICGDEASG…AGMVLGGRKF (73 aa)). The residue at position 678 (Ser678) is a Phosphoserine. One can recognise an NR LBD domain in the interval 681–915 (QDIQLIPPLI…EFPEMMSEVI (235 aa)). The tract at residues 689–935 (LINLLVSIEP…MVKPLLFHKK (247 aa)) is AF2; mediates transcriptional activation. Arg768 is a binding site for progesterone.

Belongs to the nuclear hormone receptor family. Interacts with SMARD1 and UNC45A. Interacts with CUEDC2; the interaction promotes ubiquitination, decreases sumoylation, and represses transcriptional activity. Interacts with PIAS3; the interaction promotes sumoylation of PR in a hormone-dependent manner, inhibits DNA-binding, and alters nuclear export. Interacts with SP1; the interaction requires ligand-induced phosphorylation on Ser-345 by ERK1/2-MAPK. Interacts with PRMT2. Interacts with NCOA2 and NCOA1. Interacts with KLF9. Interacts with GTF2B. In terms of processing, phosphorylated on multiple serine sites. Several of these sites are hormone-dependent. Phosphorylation on Ser-294 is highly hormone-dependent and modulates ubiquitination and sumoylation on Lys-388. Phosphorylation on Ser-345 also requires induction by hormone. Basal phosphorylation on Ser-81, Ser-162, Ser-190 and Ser-400 is increased in response to progesterone and can be phosphorylated in vitro by the CDK2-A1 complex. Increased levels of phosphorylation on Ser-400 also in the presence of EGF, heregulin, IGF, PMA and FBS. Phosphorylation at this site by CDK2 is ligand-independent, and increases nuclear translocation and transcriptional activity. Phosphorylation at Ser-162 and Ser-294, but not at Ser-190, is impaired during the G(2)/M phase of the cell cycle. Phosphorylation on Ser-345 by ERK1/2 MAPK is required for interaction with SP1. Post-translationally, sumoylation is hormone-dependent and represses transcriptional activity. Sumoylation on all three sites is enhanced by PIAS3. Desumoylated by SENP1. Sumoylation on Lys-388, the main site of sumoylation, is repressed by ubiquitination on the same site, and modulated by phosphorylation at Ser-294. Ubiquitination is hormone-dependent and represses sumoylation on the same site. Promoted by MAPK-mediated phosphorylation on Ser-294. Ubiquitinated by UBR5, leading to its degradation: UBR5 specifically recognizes and binds ligand-bound PGR when it is not associated with coactivators (NCOAs). In presence of NCOAs, the UBR5-degron is not accessible, preventing its ubiquitination and degradation. In terms of processing, palmitoylated by ZDHHC7 and ZDHHC21. Palmitoylation is required for plasma membrane targeting and for rapid intracellular signaling via ERK and AKT kinases and cAMP generation.

It localises to the nucleus. It is found in the cytoplasm. Its function is as follows. The steroid hormones and their receptors are involved in the regulation of eukaryotic gene expression and affect cellular proliferation and differentiation in target tissues. Transcriptional activator of several progesteron-dependent promoters in a variety of cell types. Involved in activation of SRC-dependent MAPK signaling on hormone stimulation. This is Progesterone receptor (PGR) from Macaca sylvanus (Barbary macaque).